Reading from the N-terminus, the 147-residue chain is D-aminoacyl-tRNA deacylase (147 aa).

The short motif at 137 to 138 (GP) is the Gly-cisPro motif, important for rejection of L-amino acids element.

This sequence belongs to the DTD family. Homodimer.

The protein localises to the cytoplasm. It carries out the reaction glycyl-tRNA(Ala) + H2O = tRNA(Ala) + glycine + H(+). The enzyme catalyses a D-aminoacyl-tRNA + H2O = a tRNA + a D-alpha-amino acid + H(+). In terms of biological role, an aminoacyl-tRNA editing enzyme that deacylates mischarged D-aminoacyl-tRNAs. Also deacylates mischarged glycyl-tRNA(Ala), protecting cells against glycine mischarging by AlaRS. Acts via tRNA-based rather than protein-based catalysis; rejects L-amino acids rather than detecting D-amino acids in the active site. By recycling D-aminoacyl-tRNA to D-amino acids and free tRNA molecules, this enzyme counteracts the toxicity associated with the formation of D-aminoacyl-tRNA entities in vivo and helps enforce protein L-homochirality. This is D-aminoacyl-tRNA deacylase from Levilactobacillus brevis (strain ATCC 367 / BCRC 12310 / CIP 105137 / JCM 1170 / LMG 11437 / NCIMB 947 / NCTC 947) (Lactobacillus brevis).